The following is a 147-amino-acid chain: D-aminoacyl-tRNA deacylase (147 aa).

A Gly-cisPro motif, important for rejection of L-amino acids motif is present at residues 137-138 (GP).

The protein belongs to the DTD family. As to quaternary structure, homodimer.

It is found in the cytoplasm. It catalyses the reaction glycyl-tRNA(Ala) + H2O = tRNA(Ala) + glycine + H(+). The catalysed reaction is a D-aminoacyl-tRNA + H2O = a tRNA + a D-alpha-amino acid + H(+). Its function is as follows. An aminoacyl-tRNA editing enzyme that deacylates mischarged D-aminoacyl-tRNAs. Also deacylates mischarged glycyl-tRNA(Ala), protecting cells against glycine mischarging by AlaRS. Acts via tRNA-based rather than protein-based catalysis; rejects L-amino acids rather than detecting D-amino acids in the active site. By recycling D-aminoacyl-tRNA to D-amino acids and free tRNA molecules, this enzyme counteracts the toxicity associated with the formation of D-aminoacyl-tRNA entities in vivo and helps enforce protein L-homochirality. This is D-aminoacyl-tRNA deacylase from Levilactobacillus brevis (strain ATCC 367 / BCRC 12310 / CIP 105137 / JCM 1170 / LMG 11437 / NCIMB 947 / NCTC 947) (Lactobacillus brevis).